The following is a 338-amino-acid chain: Glyceraldehyde-3-phosphate dehydrogenase (338 aa).

NAD(+) contacts are provided by residues 12–13 (RI), Asp34, and Arg79. D-glyceraldehyde 3-phosphate is bound by residues 150-152 (SCT), Thr181, 210-211 (TG), and Arg233. Cys151 (nucleophile) is an active-site residue. NAD(+) is bound at residue Asn316.

It belongs to the glyceraldehyde-3-phosphate dehydrogenase family. As to quaternary structure, homotetramer.

The protein localises to the cytoplasm. The catalysed reaction is D-glyceraldehyde 3-phosphate + phosphate + NAD(+) = (2R)-3-phospho-glyceroyl phosphate + NADH + H(+). Its pathway is carbohydrate degradation; glycolysis; pyruvate from D-glyceraldehyde 3-phosphate: step 1/5. The protein is Glyceraldehyde-3-phosphate dehydrogenase (GPD) of Yarrowia lipolytica (strain CLIB 122 / E 150) (Yeast).